Reading from the N-terminus, the 411-residue chain is S-adenosylmethionine synthase (411 aa).

ATP is bound at residue His15. A Mg(2+)-binding site is contributed by Asp17. Glu43 contacts K(+). L-methionine contacts are provided by Glu56 and Gln99. The interval 99–109 (QSQEIAQGVDT) is flexible loop. Residues 179 to 181 (DGK), Asp260, 266 to 267 (RK), Ala283, and Lys287 contribute to the ATP site. Asp260 contacts L-methionine. Residue Lys291 participates in L-methionine binding.

The protein belongs to the AdoMet synthase family. In terms of assembly, homotetramer; dimer of dimers. The cofactor is Mg(2+). Requires K(+) as cofactor.

It localises to the cytoplasm. The catalysed reaction is L-methionine + ATP + H2O = S-adenosyl-L-methionine + phosphate + diphosphate. It participates in amino-acid biosynthesis; S-adenosyl-L-methionine biosynthesis; S-adenosyl-L-methionine from L-methionine: step 1/1. Its function is as follows. Catalyzes the formation of S-adenosylmethionine (AdoMet) from methionine and ATP. The overall synthetic reaction is composed of two sequential steps, AdoMet formation and the subsequent tripolyphosphate hydrolysis which occurs prior to release of AdoMet from the enzyme. This is S-adenosylmethionine synthase from Corynebacterium jeikeium (strain K411).